The chain runs to 399 residues: Succinate--CoA ligase [ADP-forming] subunit beta (399 aa).

The ATP-grasp domain occupies 9–254 (KELLAKFGVA…ETEEDPAEIE (246 aa)). ATP contacts are provided by residues Lys-46, 53-55 (GRG), Ala-112, and Glu-117. Mg(2+)-binding residues include Asn-209 and Asp-223. Substrate contacts are provided by residues Asn-274 and 331 to 333 (GIM).

The protein belongs to the succinate/malate CoA ligase beta subunit family. As to quaternary structure, heterotetramer of two alpha and two beta subunits. Mg(2+) is required as a cofactor.

The enzyme catalyses succinate + ATP + CoA = succinyl-CoA + ADP + phosphate. The catalysed reaction is GTP + succinate + CoA = succinyl-CoA + GDP + phosphate. It participates in carbohydrate metabolism; tricarboxylic acid cycle; succinate from succinyl-CoA (ligase route): step 1/1. Succinyl-CoA synthetase functions in the citric acid cycle (TCA), coupling the hydrolysis of succinyl-CoA to the synthesis of either ATP or GTP and thus represents the only step of substrate-level phosphorylation in the TCA. The beta subunit provides nucleotide specificity of the enzyme and binds the substrate succinate, while the binding sites for coenzyme A and phosphate are found in the alpha subunit. The sequence is that of Succinate--CoA ligase [ADP-forming] subunit beta from Rhizorhabdus wittichii (strain DSM 6014 / CCUG 31198 / JCM 15750 / NBRC 105917 / EY 4224 / RW1) (Sphingomonas wittichii).